A 3312-amino-acid polypeptide reads, in one-letter code: Cadherin EGF LAG seven-pass G-type receptor 3 (3312 aa).

An N-terminal signal peptide occupies residues 1-32; the sequence is MMARRPPWRGLGGRSTPILLLLLLSLFPLSQE. Residues 33–2540 are Extracellular-facing; sequence ELGGGGHQGW…RLEGDLELLA (2508 aa). Disordered regions lie at residues 90-112, 143-199, and 212-306; these read GRRQSARNSRGPPEQPNEELGIE, GRTG…RKRV, and GSKG…EARK. Over residues 159 to 173 the composition is skewed to low complexity; the sequence is SSGVPGSGNSSPLPS. A compositionally biased stretch (pro residues) spans 290–299; sequence RPGPRPPGLP. Cadherin domains lie at 326–433, 434–545, 546–651, 652–756, 757–858, 859–961, 962–1067, 1068–1169, and 1170–1265; these read PQYN…SPVF, EQAQ…APQF, SEKR…IPIF, VSTP…RPEF, TMKE…RPVF, QSAH…APQF, VASH…APVF, PAEE…SPVL, and NNFQ…RVVI. An N-linked (GlcNAc...) asparagine glycan is attached at Asn632. Asn847 carries N-linked (GlcNAc...) asparagine glycosylation. Residues Asn1182, Asn1222, Asn1317, and Asn1327 are each glycosylated (N-linked (GlcNAc...) asparagine). Residues 1375 to 1433 form the EGF-like 1; calcium-binding domain; that stretch reads DDNVCLREPCENYMKCVSVLRFDSSAPFLASASTLFRPIQPIAGLRCRCPPGFTGDFCE. Cystine bridges form between Cys1379-Cys1390, Cys1384-Cys1421, Cys1423-Cys1432, Cys1439-Cys1450, Cys1444-Cys1459, Cys1461-Cys1470, Cys1479-Cys1490, Cys1484-Cys1500, and Cys1502-Cys1513. One can recognise an EGF-like 2; calcium-binding domain in the interval 1435 to 1471; the sequence is ELDLCYSNPCRNGGACARREGGYTCVCRPRFTGEDCE. One can recognise an EGF-like 3; calcium-binding domain in the interval 1475–1514; it reads EAGRCVPGVCRNGGTCTDAPNGGFRCQCPAGGAFEGPRCE. Residues 1515–1719 form the Laminin G-like 1 domain; that stretch reads VAARSFPPSS…VANNGTMAGC (205 aa). N-linked (GlcNAc...) asparagine glycosylation is found at Asn1649 and Asn1713. 4 disulfides stabilise this stretch: Cys1693-Cys1719, Cys1726-Cys1737, Cys1731-Cys1746, and Cys1748-Cys1757. The region spanning 1722-1758 is the EGF-like 4; calcium-binding domain; sequence KLHFCDSGPCKNSGFCSERWGSFSCDCPVGFGGKDCQ. In terms of domain architecture, Laminin G-like 2 spans 1764–1944; that stretch reads PHHFRGNGTL…SHRVNAEPGC (181 aa). A glycan (N-linked (GlcNAc...) asparagine) is linked at Asn1770. 9 disulfide bridges follow: Cys1915–Cys1944, Cys1950–Cys1961, Cys1955–Cys1970, Cys1972–Cys1981, Cys1985–Cys1996, Cys1990–Cys2008, Cys2010–Cys2019, Cys2027–Cys2040, and Cys2042–Cys2052. In terms of domain architecture, EGF-like 5; calcium-binding spans 1946–1982; the sequence is VTNACASGPCPPHADCRDLWQTFSCTCQPGYYGPGCV. Asp1963 is subject to (3R)-3-hydroxyaspartate. Residues 1983–2020 enclose the EGF-like 6; calcium-binding domain; that stretch reads DACLLNPCQNQGSCRHLPGAPHGYTCDCVGGYFGHHCE. The region spanning 2021–2053 is the EGF-like 7; calcium-binding domain; it reads HRMDQQCPRGWWGSPTCGPCNCDVHKGFDPNCN. Asn2053 is a glycosylation site (N-linked (GlcNAc...) asparagine). The EGF-like 8; calcium-binding domain maps to 2055–2090; the sequence is TNGQCHCKEFHYRPRGSDSCLPCDCYPVGSTSRSCA. 5 cysteine pairs are disulfide-bonded: Cys2059/Cys2074, Cys2061/Cys2077, Cys2079/Cys2089, Cys2098/Cys2107, and Cys2110/Cys2122. Residues 2077–2124 enclose the Laminin EGF-like domain; the sequence is CDCYPVGSTSRSCAPHSGQCPCRPGALGRQCNSCDSPFAEVTASGCRV. Phosphotyrosine is present on Tyr2126. Asn2177, Asn2196, Asn2386, Asn2474, and Asn2506 each carry an N-linked (GlcNAc...) asparagine glycan. The segment at 2361-2399 is disordered; sequence THVLLPSQSPRPSPSEVLPTSSSIENSTTSSVVPPPAPP. One can recognise a GAIN-B domain in the interval 2368–2530; the sequence is QSPRPSPSEV…GVLMDASPRE (163 aa). Over residues 2380–2391 the composition is skewed to low complexity; sequence TSSSIENSTTSS. Disulfide bonds link Cys2480–Cys2512 and Cys2500–Cys2514. The GPS stretch occupies residues 2480–2530; that stretch reads CVQWDPPGLAEQHGVWTARDCELVHRNGSHARCRCSRTGTFGVLMDASPRE. Residues 2541 to 2561 form a helical membrane-spanning segment; it reads VFTHVVVAVSVAALVLTAAIL. Over 2562 to 2572 the chain is Cytoplasmic; the sequence is LSLRSLKSNVR. The chain crosses the membrane as a helical span at residues 2573 to 2593; that stretch reads GIHANVAAALGVAELLFLLGI. The Extracellular segment spans residues 2594–2601; sequence HRTHNQLV. Residues 2602–2622 traverse the membrane as a helical segment; the sequence is CTAVAILLHYFFLSTFAWLFV. The Cytoplasmic portion of the chain corresponds to 2623 to 2643; sequence QGLHLYRMQVEPRNVDRGAMR. A helical membrane pass occupies residues 2644-2664; the sequence is FYHALGWGVPAVLLGLAVGLD. Topologically, residues 2665–2681 are extracellular; the sequence is PEGYGNPDFCWISVHEP. Residues 2682 to 2702 form a helical membrane-spanning segment; it reads LIWSFAGPVVLVIVMNGTMFL. Residues 2703-2725 are Cytoplasmic-facing; that stretch reads LAARTSCSTGQREAKKTSALTLR. The chain crosses the membrane as a helical span at residues 2726–2746; that stretch reads SSFLLLLLVSASWLFGLLAVN. Over 2747 to 2753 the chain is Extracellular; sequence HSILAFH. Residues 2754-2774 traverse the membrane as a helical segment; that stretch reads YLHAGLCGLQGLAVLLLFCVL. Topologically, residues 2775-3312 are cytoplasmic; that stretch reads NADARAAWMP…SEVPRSEGHS (538 aa). Disordered stretches follow at residues 2888 to 2927 and 2978 to 3006; these read AGADSDSDSDLSLEEERSLSIPSSESEDNGRTRGRFQRPL and TSKDAANNNQPDPALTSGDETSLGRAQRQ. Acidic residues predominate over residues 2890–2900; the sequence is ADSDSDSDLSL. At Tyr3051 the chain carries Phosphotyrosine. Disordered stretches follow at residues 3086–3243 and 3256–3312; these read EEAP…TEQL and SALS…EGHS. Ser3097 carries the phosphoserine modification. Low complexity-rich tracts occupy residues 3175–3198, 3256–3265, and 3272–3281; these read SPQRQLSRDPLLPSRPLDSLSRSS, SALSSVQSSS, and TTATPSATAS. Residues 3287-3300 are compositionally biased toward polar residues; it reads TPRSATSHSISELS.

The protein belongs to the G-protein coupled receptor 2 family. LN-TM7 subfamily.

It localises to the cell membrane. Its function is as follows. Receptor that may have an important role in cell/cell signaling during nervous system formation. The protein is Cadherin EGF LAG seven-pass G-type receptor 3 (CELSR3) of Homo sapiens (Human).